A 427-amino-acid chain; its full sequence is Serine hydroxymethyltransferase (427 aa).

Residues Leu-122 and 126–128 (GHL) contribute to the (6S)-5,6,7,8-tetrahydrofolate site. Position 231 is an N6-(pyridoxal phosphate)lysine (Lys-231). (6S)-5,6,7,8-tetrahydrofolate contacts are provided by residues Glu-247 and 355–357 (SPF).

This sequence belongs to the SHMT family. In terms of assembly, homodimer. The cofactor is pyridoxal 5'-phosphate.

The protein localises to the cytoplasm. It carries out the reaction (6R)-5,10-methylene-5,6,7,8-tetrahydrofolate + glycine + H2O = (6S)-5,6,7,8-tetrahydrofolate + L-serine. It functions in the pathway one-carbon metabolism; tetrahydrofolate interconversion. It participates in amino-acid biosynthesis; glycine biosynthesis; glycine from L-serine: step 1/1. In terms of biological role, catalyzes the reversible interconversion of serine and glycine with tetrahydrofolate (THF) serving as the one-carbon carrier. This reaction serves as the major source of one-carbon groups required for the biosynthesis of purines, thymidylate, methionine, and other important biomolecules. Also exhibits THF-independent aldolase activity toward beta-hydroxyamino acids, producing glycine and aldehydes, via a retro-aldol mechanism. The polypeptide is Serine hydroxymethyltransferase (Crocosphaera subtropica (strain ATCC 51142 / BH68) (Cyanothece sp. (strain ATCC 51142))).